Reading from the N-terminus, the 442-residue chain is MKLELGNFYVEEIVFGEKTSFKDGVLTINKQEALDYVMEDENITHAELHIVKPGDMVRLCPVKEAIEPRIKLDGRTYFPGVTDEELTRCGEGRTHALKGCSVLVVGKHWGGFQDGLIDMGGEGAKYTYYSTLKNIVLVGDTNEDFEKNEQQKKNKALRWAGHKLAEYIGKTVKDMEPQEVETYELEPVTQRSEEVTKLPGVVFVMQPQSQMEELGYNDMVYGWDMNRMVPTYMHPNEVLDGAIISGSFMPCSSKWSTYDFQNFPALKRLYAEHGKTVNFLGVIMSNLNVALQQKQRSALFVAQMAKSLGAQGAIVAEEGYGNPDADFIACIVALENEGIKTVGLTNECTGRDGFSQPLVTLDEKANAIVSCGNVSELVELPPMPVVLGELEALARDGLSGGWAGDEILGSSVKADGSVIMENNAMFCGDQVVGWSTKTMKEF.

Heterotetramer of two alpha and two beta subunits. Component of the betaine reductase complex, together with components A and C. PB is substrate specific.

The catalysed reaction is acetyl phosphate + trimethylamine + [thioredoxin]-disulfide + H2O = glycine betaine + [thioredoxin]-dithiol + phosphate + H(+). Its function is as follows. In the first step of betaine reductase, the substrate is bound to component PB via a Schiff base intermediate. Then the PB-activated substrate is nucleophilically attacked by the selenol anion of component PA to transform it to a carboxymethylated selenoether and the respective amine. By action of component PC, acetyl phosphate is formed, leaving component PA in its oxidized state. Finally component PA becomes reduced by the thioredoxin system to start a new catalytic cycle of reductive deamination. The protein is Betaine reductase complex component B subunit alpha (grdI) of Peptoclostridium acidaminophilum (Eubacterium acidaminophilum).